We begin with the raw amino-acid sequence, 277 residues long: Undecaprenyl-diphosphatase (277 aa).

Transmembrane regions (helical) follow at residues 53–73 (LGAI…VILG), 85–105 (VNLL…ADLI), 108–128 (WLFN…VMLW), 183–203 (AATE…AAYS), 215–235 (GDLP…MLAV), and 250–270 (FAWY…LGVV).

It belongs to the UppP family.

The protein resides in the cell inner membrane. The enzyme catalyses di-trans,octa-cis-undecaprenyl diphosphate + H2O = di-trans,octa-cis-undecaprenyl phosphate + phosphate + H(+). In terms of biological role, catalyzes the dephosphorylation of undecaprenyl diphosphate (UPP). Confers resistance to bacitracin. This is Undecaprenyl-diphosphatase from Azotobacter vinelandii (strain DJ / ATCC BAA-1303).